The sequence spans 479 residues: Ribulose bisphosphate carboxylase large chain (479 aa).

The propeptide occupies 1–2 (MS). Pro3 bears the N-acetylproline mark. At Lys14 the chain carries N6,N6,N6-trimethyllysine. Substrate-binding residues include Asn123 and Thr173. Lys175 functions as the Proton acceptor in the catalytic mechanism. A substrate-binding site is contributed by Lys177. Positions 201, 203, and 204 each coordinate Mg(2+). Lys201 is modified (N6-carboxylysine). The active-site Proton acceptor is His294. Substrate contacts are provided by Arg295, His327, and Ser379.

The protein belongs to the RuBisCO large chain family. Type I subfamily. As to quaternary structure, heterohexadecamer of 8 large chains and 8 small chains; disulfide-linked. The disulfide link is formed within the large subunit homodimers. The cofactor is Mg(2+). The disulfide bond which can form in the large chain dimeric partners within the hexadecamer appears to be associated with oxidative stress and protein turnover.

It is found in the plastid. The protein resides in the chloroplast. The enzyme catalyses 2 (2R)-3-phosphoglycerate + 2 H(+) = D-ribulose 1,5-bisphosphate + CO2 + H2O. It carries out the reaction D-ribulose 1,5-bisphosphate + O2 = 2-phosphoglycolate + (2R)-3-phosphoglycerate + 2 H(+). RuBisCO catalyzes two reactions: the carboxylation of D-ribulose 1,5-bisphosphate, the primary event in carbon dioxide fixation, as well as the oxidative fragmentation of the pentose substrate in the photorespiration process. Both reactions occur simultaneously and in competition at the same active site. This chain is Ribulose bisphosphate carboxylase large chain, found in Ananas comosus (Pineapple).